A 195-amino-acid chain; its full sequence is Protein lin-28 homolog A (195 aa).

A CSD domain is found at 33–106 (QGSGVCKWFN…GLESTQVTGP (74 aa)). The tract at residues 98–127 (LESTQVTGPGGAPCIGSERRPKVKGQQKRR) is disordered. Residues 107 to 130 (GGAPCIGSERRPKVKGQQKRRQRG) form a flexible linker region. The span at 118 to 127 (PKVKGQQKRR) shows a compositional bias: basic residues. 2 CCHC-type zinc fingers span residues 131–148 (DRCY…ECKL) and 153–170 (KKCH…QCPE). Residues C133, C136, H141, C146, C155, C158, H163, and C168 each contribute to the Zn(2+) site.

The protein belongs to the lin-28 family. In terms of assembly, monomer.

The protein localises to the cytoplasm. Its subcellular location is the rough endoplasmic reticulum. It localises to the P-body. The protein resides in the stress granule. It is found in the nucleus. The protein localises to the nucleolus. Its function is as follows. RNA-binding protein that inhibits processing of pre-let-7 miRNAs and regulates translation of mRNAs that control developmental timing, pluripotency and metabolism. Seems to recognize a common structural G-quartet (G4) feature in its miRNA and mRNA targets. 'Translational enhancer' that drives specific mRNAs to polysomes and increases the efficiency of protein synthesis. Its association with the translational machinery and target mRNAs results in an increased number of initiation events per molecule of mRNA and, indirectly, in mRNA stabilization. Suppressor of microRNA (miRNA) biogenesis, including that of let-7. Binds specific target miRNA precursors (pre-miRNAs), recognizing an 5'-GGAG-3' motif found in their terminal loop, and recruits uridylyltransferase. This results in the terminal uridylation of target pre-miRNAs. Uridylated pre-miRNAs fail to be processed by Dicer and undergo degradation. Localized to the periendoplasmic reticulum area, binds to a large number of spliced mRNAs and inhibits the translation of mRNAs destined for the ER, reducing the synthesis of transmembrane proteins, ER or Golgi lumen proteins, and secretory proteins. Binds to and enhances the translation of mRNAs for several metabolic enzymes, increasing glycolysis and oxidative phosphorylation. Which, with the let-7 repression may enhance tissue repair in adult tissue. The sequence is that of Protein lin-28 homolog A (lin28a) from Xenopus laevis (African clawed frog).